The chain runs to 72 residues: Large ribosomal subunit protein bL28 (72 aa).

Belongs to the bacterial ribosomal protein bL28 family.

This is Large ribosomal subunit protein bL28 from Chlorobium luteolum (strain DSM 273 / BCRC 81028 / 2530) (Pelodictyon luteolum).